A 330-amino-acid chain; its full sequence is Biotin synthase (330 aa).

The 224-residue stretch at 53–276 folds into the Radical SAM core domain; the sequence is NNIRLNVLLS…VFPFKELRLS (224 aa). Residues Cys68, Cys72, and Cys75 each coordinate [4Fe-4S] cluster. Positions 112, 144, 204, and 274 each coordinate [2Fe-2S] cluster.

It belongs to the radical SAM superfamily. Biotin synthase family. Homodimer. [4Fe-4S] cluster serves as cofactor. It depends on [2Fe-2S] cluster as a cofactor.

The enzyme catalyses (4R,5S)-dethiobiotin + (sulfur carrier)-SH + 2 reduced [2Fe-2S]-[ferredoxin] + 2 S-adenosyl-L-methionine = (sulfur carrier)-H + biotin + 2 5'-deoxyadenosine + 2 L-methionine + 2 oxidized [2Fe-2S]-[ferredoxin]. It participates in cofactor biosynthesis; biotin biosynthesis; biotin from 7,8-diaminononanoate: step 2/2. Functionally, catalyzes the conversion of dethiobiotin (DTB) to biotin by the insertion of a sulfur atom into dethiobiotin via a radical-based mechanism. The sequence is that of Biotin synthase from Streptococcus agalactiae serotype V (strain ATCC BAA-611 / 2603 V/R).